The chain runs to 390 residues: Multidrug export protein EmrA (390 aa).

The Cytoplasmic portion of the chain corresponds to 1–24 (MSANAETQTPQQPVKKSGKRKRLL). A helical transmembrane segment spans residues 25 to 45 (LLLTLLFIIIAVAIGIYWFLV). At 46-390 (LRHFEETDDA…IDDIVKANAG (345 aa)) the chain is on the periplasmic side. A coiled-coil region spans residues 120-180 (INSKQLQANI…QAQLDVAIQQ (61 aa)).

It belongs to the membrane fusion protein (MFP) (TC 8.A.1) family. Homodimer and homotrimer. Part of the tripartite efflux system EmrAB-TolC, which is composed of an inner membrane transporter, EmrB, a periplasmic membrane fusion protein, EmrA, and an outer membrane component, TolC. The complex forms a large protein conduit and can translocate molecules across both the inner and outer membranes. Interacts with EmrB. EmrAB complex forms a dimer in vitro.

Its subcellular location is the cell inner membrane. Functionally, part of the tripartite efflux system EmrAB-TolC, which confers resistance to antibiotics such as CCCP, FCCP, 2,4-dinitrophenol and nalidixic acid. EmrA is a drug-binding protein that provides a physical link between EmrB and TolC. The chain is Multidrug export protein EmrA (emrA) from Escherichia coli (strain K12).